Consider the following 309-residue polypeptide: Tagatose-6-phosphate kinase (309 aa).

The protein belongs to the carbohydrate kinase PfkB family. LacC subfamily.

The enzyme catalyses D-tagatofuranose 6-phosphate + ATP = D-tagatofuranose 1,6-bisphosphate + ADP + H(+). The protein operates within carbohydrate metabolism; D-tagatose 6-phosphate degradation; D-glyceraldehyde 3-phosphate and glycerone phosphate from D-tagatose 6-phosphate: step 1/2. The protein is Tagatose-6-phosphate kinase of Streptococcus pneumoniae (strain P1031).